The sequence spans 60 residues: Large ribosomal subunit protein bL32 (60 aa).

The span at 1 to 16 (MAVPKRKTTPSKRGMR) shows a compositional bias: basic residues. A disordered region spans residues 1 to 34 (MAVPKRKTTPSKRGMRRAHDALSSPVYIEDKDSG).

The protein belongs to the bacterial ribosomal protein bL32 family.

This Maricaulis maris (strain MCS10) (Caulobacter maris) protein is Large ribosomal subunit protein bL32.